Consider the following 467-residue polypeptide: MKKHIFEDIILQNALNFTEEVVEIFGDLLNKGMNITELVARIKELTDKLGRGAIEAIIEELDRIIKEDKRRKEKWVVERKDKKRLTTVLGDIEYERTYYKSKEDGRYTYLVDDALEIGRHDRIEKGVKIKLVENAIEESYERSSKKACPEELSKQTVLNAIREIGEVEVKREIKEKKEVRVLYIEADEDHVPLQDGRDETPRLVYIHEGREEKNGRNVLKNVYYKAYVGEKPEDIWIDVANYIEDNYKEEKIEKIYIAGDGAPWIKEGLKWILKSRFVLDRYHLNKYVLKATSKEPKYRDKIWRAINEGDKERVKKVFDELIKAAEEEREKEKIKEAKKYILNNWEGIKIYNEDEDVIGCSAEGHISHVFSARLSRNPLGWSREGLKLMAKLRVFSKNGGDLREVEWGKKKNINAGSYKLTKKQIKEAVRRVKTSTNEKINNITVLNIGKVTPIYRVLRALKYAQVI.

The protein belongs to the UPF0236 family.

In Caldanaerobacter subterraneus subsp. tengcongensis (strain DSM 15242 / JCM 11007 / NBRC 100824 / MB4) (Thermoanaerobacter tengcongensis), this protein is UPF0236 protein TTE0610/TTE0881/TTE1053/TTE2432.